Here is a 1064-residue protein sequence, read N- to C-terminus: MIFNASQDSKTEIEYQTISSTQTYLAEEQSERLHNLISKEQLEKLNQAFNERPDSQVGFDDLRGLLLEQDITFNDAVYNRLFLKINQNRDFMVDWNEFVSYLIFGFQEEDPSSQKESLILPISVAPSVRKTEHRSTVCCVALLKAKSDQVPIEEVTETVNFSFGGEDSPEASGMWVTASHEGMLRFWTSHMEPIRTATSESSKPHAVYCMSYAFYNNGKVHSKLVLGDYAGNVRILSYSPNLRGPFQAKPGAALIEVVWADVLKGKIPQMIPKEYINLHNEMISCVHYSLHMNALFATAEYRNTKKYRGRCPGMIMVTYDERSNFRVPLGVSTFFVAESHNIVVTGGPDTFVRIWDVYIPTEPSAILTGHNGGIVMVFVQPEENKVYSVDYQKIIKVWDLQEHTLLQTYGELVRLIHPSETDMTYFYHSHLRELIVAGRKLISIKCCPRVRVDLTDGNTHAAPVSVVLYNRLFRNIVTCGLDSYIIVWDPWSGRRKIIMKNCHTKMIYGEIIDIEITAATFDPLEQFLLTGARDGTLKIWNYNNAVVVRNMSIMPDQEVTSVIWVVDRILAMGWDRQVTEFNDVEGREYGDPKKWSKFHTDDITCADVKLGEGVVTATYSGEVIFWKLETGQPYRRYSVMDPTRFIELKLTPEEEKLMRRSKRLMSRLGSSRMSRATAITMPKADDGRDYGQNVPISVQAVLFLQTRPQTIQHGSVFISLDTGYIQKVYSHHSRGGYMSQFLSVHKTGDCVLTMCTDRKNRYIYTGTAFGYIKVWHIVNYPEAEKVHVCMPRLRLEFIFMRKEFWVTRAKRVVRHQREPLLVSSYKAHLKAINSIAFINLPKIVFRGSHDYSCRLWTQGGRYLGTLGTVLPWSKLSPFERAGSENQVYRLPPDIKKVASSTTLKVISGVQMDRPAKRAEVKAPEDRDEETAQTDDGYDLKKIFDKPLKEPILGKHFTLPGKSVMDQRIDVDTTQSYIAVYTHLKVHHTEMLERLPTPAVISRVAGENYMDHYVPVEGKVDLSGSALNIKQPPRRNVRPNDPRNMRMAKTRGDMGPGPSPSQQSE.

8 WD repeats span residues Glu153 to Ala197, Arg326 to Ala365, Gly369 to Thr408, Thr459 to Ile498, Ile511 to Asn550, Phe598 to Ser638, Lys746 to Lys785, and Ala827 to Leu866. Positions Pro914–Glu924 are enriched in basic and acidic residues. Disordered regions lie at residues Pro914–Asp935 and Gly1023–Glu1064. Residues Asp925–Asp935 show a composition bias toward acidic residues.

The polypeptide is WD repeat-containing protein on Y chromosome (Drosophila pseudoobscura pseudoobscura (Fruit fly)).